The following is a 286-amino-acid chain: Bifunctional protein FolD (286 aa).

Residues 170 to 172 (GHS) and isoleucine 236 contribute to the NADP(+) site.

It belongs to the tetrahydrofolate dehydrogenase/cyclohydrolase family. In terms of assembly, homodimer.

It catalyses the reaction (6R)-5,10-methylene-5,6,7,8-tetrahydrofolate + NADP(+) = (6R)-5,10-methenyltetrahydrofolate + NADPH. The enzyme catalyses (6R)-5,10-methenyltetrahydrofolate + H2O = (6R)-10-formyltetrahydrofolate + H(+). It functions in the pathway one-carbon metabolism; tetrahydrofolate interconversion. Catalyzes the oxidation of 5,10-methylenetetrahydrofolate to 5,10-methenyltetrahydrofolate and then the hydrolysis of 5,10-methenyltetrahydrofolate to 10-formyltetrahydrofolate. This is Bifunctional protein FolD from Methanococcoides burtonii (strain DSM 6242 / NBRC 107633 / OCM 468 / ACE-M).